The chain runs to 149 residues: Transcriptional repressor NrdR (149 aa).

A zinc finger lies at 3–34; it reads CPFCGANDTKVIDSRLVADGHQVRRRRQCLAC. Residues 49 to 139 form the ATP-cone domain; it reads PRVIKTDGNR…VYRSFEDIRE (91 aa).

Belongs to the NrdR family. It depends on Zn(2+) as a cofactor.

In terms of biological role, negatively regulates transcription of bacterial ribonucleotide reductase nrd genes and operons by binding to NrdR-boxes. This is Transcriptional repressor NrdR from Photobacterium profundum (strain SS9).